The primary structure comprises 76 residues: MMKLTCVLIIAVLFLTACQLTTAETRDEYRAVRSSDEVQNSRSTDDCSTAGCKNVPCCEGLVCTGPSQGPVCQPLA.

A signal peptide spans 1-23 (MMKLTCVLIIAVLFLTACQLTTA). A propeptide spanning residues 24-42 (ETRDEYRAVRSSDEVQNSR) is cleaved from the precursor. The segment at 29–49 (YRAVRSSDEVQNSRSTDDCST) is disordered. Disulfide bonds link C47-C58, C52-C63, and C57-C72.

It belongs to the conotoxin O1 superfamily. Expressed by the venom duct.

Its subcellular location is the secreted. The sequence is that of Conotoxin VnMKLT2-013 from Conus ventricosus (Mediterranean cone).